We begin with the raw amino-acid sequence, 160 residues long: Inorganic pyrophosphatase (160 aa).

Substrate-binding residues include Lys16, Arg28, and Tyr40. The Mg(2+) site is built by Asp50, Asp55, and Asp87. Tyr126 contributes to the substrate binding site.

The protein belongs to the PPase family. In terms of assembly, homohexamer. It depends on Mg(2+) as a cofactor.

Its subcellular location is the cytoplasm. It carries out the reaction diphosphate + H2O = 2 phosphate + H(+). In terms of biological role, catalyzes the hydrolysis of inorganic pyrophosphate (PPi) forming two phosphate ions. The polypeptide is Inorganic pyrophosphatase (Nanoarchaeum equitans (strain Kin4-M)).